We begin with the raw amino-acid sequence, 660 residues long: MSLRAKTCPQRREMASATSGPGRCVSKGGLGRRPPLARVRVAVRLRPFMDGETEAKELPCVRAIDSCSLEVANWKKYQETLKYQFDAFYGEKSTQQEVYVGSVQPILRHLLEGQNASVLAYGPTGAGKTHTMLGSPEQPGVIPRALMDLLQLAREESAEGRPWDVSVAMSYLEIYQEKVLDLLDPASGDLVIREDCRGNILIPGLTQKPITSFSDFEQHFLPASRNRAVGATRLNQRSSRSHAVLLVKVDQRERLTPFRQREGKLYLIDLAGSEDNRRTGNQGIRLKESGAINTSLFVLGKVVDALNQGLPRIPYRDSKLTRLLQDSLGGSAHSILIANIAPERRFYQDTISALNFTARSKEVINRPFTNESLQPHALAPVKLSQKELLGPSEAKKAKGPEEESTGSPESTAAPASASQKLSLLQKLSNMDPAMLENLLSMERLLGSQGSQGTPLLNTPKRERMVLMKTVEEKNLEIERLKMKQKELEAKVLAQEAPDPREKENTPTILQPPASYSGTVAKPLKKAVVMPLQRIQKQRESSNQIQLLKKGPKRKLEPSPESEAVEKDEDYWEVQISPELLAHGRKKLLDLLNEGSARELRSLQRIGQKKAQLIVGWRELHGPFSEVEDLEQVEGISGKQVESFLKANLLSLAASQHSGPS.

Residues Met1–Gly31 are disordered. Positions Arg38–Val363 constitute a Kinesin motor domain. Gly122–Thr129 contributes to the ATP binding site. The segment at Pro391–Ser418 is disordered. The segment covering Thr405 to Ser418 has biased composition (low complexity). Phosphoserine occurs at positions 407, 422, and 447. Residue Lys460 forms a Glycyl lysine isopeptide (Lys-Gly) (interchain with G-Cter in SUMO2) linkage. A coiled-coil region spans residues Lys460–Thr505. Disordered stretches follow at residues Ala493–Ser516 and Ile534–Asp567. Residues Thr505–Ser516 show a composition bias toward polar residues. A phosphoserine mark is found at Ser540 and Ser576.

Belongs to the TRAFAC class myosin-kinesin ATPase superfamily. Kinesin family. As to quaternary structure, interacts with FAM83D and SIAH1. Ubiquitinated; mediated by SIAH1 and leading to its subsequent proteasomal degradation.

It is found in the nucleus. It localises to the cytoplasm. Its subcellular location is the cytoskeleton. In terms of biological role, kinesin family member that is involved in spindle formation and the movements of chromosomes during mitosis and meiosis. Binds to microtubules and to DNA. Plays a role in congression of laterally attached chromosomes in NDC80-depleted cells. The protein is Kinesin-like protein KIF22 (Kif22) of Mus musculus (Mouse).